A 105-amino-acid chain; its full sequence is Nucleoid-associated protein TTHA1599 (105 aa).

Belongs to the YbaB/EbfC family. As to quaternary structure, homodimer.

Its subcellular location is the cytoplasm. It is found in the nucleoid. Its function is as follows. Binds to DNA and alters its conformation. May be involved in regulation of gene expression, nucleoid organization and DNA protection. This Thermus thermophilus (strain ATCC 27634 / DSM 579 / HB8) protein is Nucleoid-associated protein TTHA1599.